The primary structure comprises 638 residues: Chaperone protein DnaK (638 aa).

T198 carries the post-translational modification Phosphothreonine; by autocatalysis. The disordered stretch occupies residues 600-638 (KTQTEGGAQPGAEADGDTGAKGGEKVVDADFEEVKDDKK). Positions 628-638 (ADFEEVKDDKK) are enriched in acidic residues.

It belongs to the heat shock protein 70 family.

Functionally, acts as a chaperone. In Geobacter metallireducens (strain ATCC 53774 / DSM 7210 / GS-15), this protein is Chaperone protein DnaK.